Consider the following 301-residue polypeptide: GTP cyclohydrolase FolE2 (301 aa).

It belongs to the GTP cyclohydrolase IV family.

The enzyme catalyses GTP + H2O = 7,8-dihydroneopterin 3'-triphosphate + formate + H(+). It functions in the pathway cofactor biosynthesis; 7,8-dihydroneopterin triphosphate biosynthesis; 7,8-dihydroneopterin triphosphate from GTP: step 1/1. In terms of biological role, converts GTP to 7,8-dihydroneopterin triphosphate. The polypeptide is GTP cyclohydrolase FolE2 (Pseudomonas syringae pv. tomato (strain ATCC BAA-871 / DC3000)).